The sequence spans 265 residues: Hydroxyethylthiazole kinase (265 aa).

M44 contacts substrate. Positions 120 and 166 each coordinate ATP. G193 contributes to the substrate binding site.

The protein belongs to the Thz kinase family. Mg(2+) is required as a cofactor.

It catalyses the reaction 5-(2-hydroxyethyl)-4-methylthiazole + ATP = 4-methyl-5-(2-phosphooxyethyl)-thiazole + ADP + H(+). It functions in the pathway cofactor biosynthesis; thiamine diphosphate biosynthesis; 4-methyl-5-(2-phosphoethyl)-thiazole from 5-(2-hydroxyethyl)-4-methylthiazole: step 1/1. Functionally, catalyzes the phosphorylation of the hydroxyl group of 4-methyl-5-beta-hydroxyethylthiazole (THZ). The protein is Hydroxyethylthiazole kinase of Methanosphaerula palustris (strain ATCC BAA-1556 / DSM 19958 / E1-9c).